Here is a 315-residue protein sequence, read N- to C-terminus: Glycine--tRNA ligase alpha subunit (315 aa).

The protein belongs to the class-II aminoacyl-tRNA synthetase family. In terms of assembly, tetramer of two alpha and two beta subunits.

Its subcellular location is the cytoplasm. The enzyme catalyses tRNA(Gly) + glycine + ATP = glycyl-tRNA(Gly) + AMP + diphosphate. This chain is Glycine--tRNA ligase alpha subunit, found in Pseudomonas aeruginosa (strain LESB58).